Consider the following 369-residue polypeptide: UPF0284 protein cce_1085 (369 aa).

The protein belongs to the UPF0284 family.

In Crocosphaera subtropica (strain ATCC 51142 / BH68) (Cyanothece sp. (strain ATCC 51142)), this protein is UPF0284 protein cce_1085.